Reading from the N-terminus, the 257-residue chain is UPF0259 membrane protein WIGBR3650 (257 aa).

6 helical membrane-spanning segments follow: residues 23-43 (IIFF…IFLP), 89-109 (LSSL…INTI), 122-142 (IILS…ISFL), 148-168 (ALML…PILI), 190-210 (IKTV…ILVI), and 223-243 (VKIF…IYMY).

The protein belongs to the UPF0259 family.

The protein localises to the cell membrane. This chain is UPF0259 membrane protein WIGBR3650, found in Wigglesworthia glossinidia brevipalpis.